Consider the following 396-residue polypeptide: Obg-like ATPase 1 (396 aa).

An OBG-type G domain is found at 23-283 (LKIGIVGLPN…MSAEEKQKYL (261 aa)). 32-37 (NVGKST) is an ATP binding site. Residues S36 and T56 each coordinate Mg(2+). L231 serves as a coordination point for ATP. The Nuclear export signal signature appears at 267–274 (LELKLQDM). The region spanning 304–387 (QLEYFFTAGP…EDGDIIFFKF (84 aa)) is the TGS domain.

It belongs to the TRAFAC class OBG-HflX-like GTPase superfamily. OBG GTPase family. YchF/OLA1 subfamily. In terms of assembly, monomer. It depends on Mg(2+) as a cofactor.

The protein resides in the cytoplasm. It localises to the nucleus. Its subcellular location is the nucleolus. Its function is as follows. Hydrolyzes ATP, and can also hydrolyze GTP with lower efficiency. Has lower affinity for GTP. The polypeptide is Obg-like ATPase 1 (Gallus gallus (Chicken)).